Consider the following 156-residue polypeptide: MPRKGHIAKRDVLPDPLYNSKVVTKLINSIMLDGKKGVAQKICYDAFEIIAEKSGKDAMEVFETAMNNIMPLLEVKARRIGGATYQVPIEVRPERRQTLGIRWMLIAARKRGERSMRERLAGELLDASNNTGAAVKKREDTHKMAEANKAFAHYRY.

Belongs to the universal ribosomal protein uS7 family. Part of the 30S ribosomal subunit. Contacts proteins S9 and S11.

Its function is as follows. One of the primary rRNA binding proteins, it binds directly to 16S rRNA where it nucleates assembly of the head domain of the 30S subunit. Is located at the subunit interface close to the decoding center, probably blocks exit of the E-site tRNA. This is Small ribosomal subunit protein uS7 from Clostridium botulinum (strain 657 / Type Ba4).